We begin with the raw amino-acid sequence, 346 residues long: NADH-ubiquinone oxidoreductase chain 2 (346 aa).

11 consecutive transmembrane segments (helical) span residues 3-23 (PLIF…VMMS), 25-45 (HWLM…PILM), 59-79 (YFLT…INLM), 96-116 (IIMT…FWVP), 122-142 (ISLT…MSIL), 149-169 (INLN…GWGG), 178-198 (IMAY…VYNP), 200-220 (LTML…MLFI), 242-262 (TLIL…GFMP), 274-294 (SSII…YFYM), and 322-342 (ITLL…TPML).

Belongs to the complex I subunit 2 family. In terms of assembly, core subunit of respiratory chain NADH dehydrogenase (Complex I) which is composed of 45 different subunits. Interacts with TMEM242.

It localises to the mitochondrion inner membrane. It catalyses the reaction a ubiquinone + NADH + 5 H(+)(in) = a ubiquinol + NAD(+) + 4 H(+)(out). Its function is as follows. Core subunit of the mitochondrial membrane respiratory chain NADH dehydrogenase (Complex I) which catalyzes electron transfer from NADH through the respiratory chain, using ubiquinone as an electron acceptor. Essential for the catalytic activity and assembly of complex I. The polypeptide is NADH-ubiquinone oxidoreductase chain 2 (Equus caballus (Horse)).